The chain runs to 439 residues: Gap junction gamma-2 protein (439 aa).

The Cytoplasmic segment spans residues 1 to 25 (MTNMSWSFLTRLLEEIHNHSTFVGK). Residues 26–46 (VWLTVLVVFRIVLTAVGGEAI) traverse the membrane as a helical segment. The Extracellular segment spans residues 47 to 78 (YSDEQAKFTCNTRQPGCDNVCYDAFAPLSHVR). The chain crosses the membrane as a helical span at residues 79-99 (FWVFQIVVISTPSVMYLGYAV). At 100-216 (HRLARASEQE…EGLMRVYVAQ (117 aa)) the chain is on the cytoplasmic side. A disordered region spans residues 108 to 178 (QERRRALRRR…AEEAGAEEAC (71 aa)). Over residues 112–125 (RALRRRPGPRRAPR) the composition is skewed to basic residues. Over residues 140-174 (DLGEEEPMLGLGEEEEEEETGAAEGAGEEAEEAGA) the composition is skewed to acidic residues. Residues 217–237 (LVARAAFEVAFLVGQYLLYGF) form a helical membrane-spanning segment. At 238-265 (EVRPFFPCSRQPCPHVVDCFVSRPTEKT) the chain is on the extracellular side. A helical membrane pass occupies residues 266–286 (VFLLVMYVVSCLCLLLNLCEM). The Cytoplasmic portion of the chain corresponds to 287–439 (AHLGLGSAQD…SRDGKTTVWI (153 aa)). A disordered region spans residues 364–439 (AGDRDRDSSP…SRDGKTTVWI (76 aa)). Serine 371 bears the Phosphoserine mark. A compositionally biased stretch (low complexity) spans 378–393 (PAASRGPPRAGAPASR).

Belongs to the connexin family. Gamma-type subfamily. A connexon is composed of a hexamer of connexins. Interacts with TJP1. Expressed in central nervous system, in sciatic nerve and sural nerve. Also detected in skeletal muscles.

The protein localises to the cell membrane. It is found in the cell junction. The protein resides in the gap junction. In terms of biological role, one gap junction consists of a cluster of closely packed pairs of transmembrane channels, the connexons, through which materials of low MW diffuse from one cell to a neighboring cell. May play a role in myelination in central and peripheral nervous systems. The chain is Gap junction gamma-2 protein (GJC2) from Homo sapiens (Human).